A 357-amino-acid chain; its full sequence is D-alanine--D-alanine ligase A (357 aa).

Residues 143–348 (KRLLREAGLA…YSKVIDVLIE (206 aa)) form the ATP-grasp domain. 171–226 (AGALGLPFFAKPARQGSSFGVSKVHDRDGFEQAVETALRYDSKALIEEFVDGREIE) lines the ATP pocket. Mg(2+) contacts are provided by D302, E315, and N317.

This sequence belongs to the D-alanine--D-alanine ligase family. Mg(2+) is required as a cofactor. The cofactor is Mn(2+).

Its subcellular location is the cytoplasm. It catalyses the reaction 2 D-alanine + ATP = D-alanyl-D-alanine + ADP + phosphate + H(+). It participates in cell wall biogenesis; peptidoglycan biosynthesis. Functionally, cell wall formation. The protein is D-alanine--D-alanine ligase A of Mesorhizobium japonicum (strain LMG 29417 / CECT 9101 / MAFF 303099) (Mesorhizobium loti (strain MAFF 303099)).